Consider the following 500-residue polypeptide: Beta-glucosidase 28 (500 aa).

Residues 1-24 (MDRRLLLSALLFIALACSSNRVHG) form the signal peptide. Gln-45 is an a beta-D-glucoside binding site. Asn-111 carries an N-linked (GlcNAc...) asparagine glycan. A beta-D-glucoside contacts are provided by residues His-146 and 191 to 192 (NE). Glu-192 functions as the Proton donor in the catalytic mechanism. A disulfide bridge connects residues Cys-211 and Cys-219. Residue Tyr-337 coordinates a beta-D-glucoside. Asn-362 is a glycosylation site (N-linked (GlcNAc...) asparagine). Glu-408 is an a beta-D-glucoside binding site. The Nucleophile role is filled by Glu-408. N-linked (GlcNAc...) asparagine glycosylation is found at Asn-409, Asn-415, and Asn-416. A beta-D-glucoside is bound by residues Trp-457, 464-465 (EF), and Phe-473.

It belongs to the glycosyl hydrolase 1 family.

The enzyme catalyses Hydrolysis of terminal, non-reducing beta-D-glucosyl residues with release of beta-D-glucose.. The protein is Beta-glucosidase 28 (BGLU28) of Oryza sativa subsp. japonica (Rice).